The following is an 839-amino-acid chain: AMP deaminase (839 aa).

Residues 8–28 traverse the membrane as a helical segment; sequence LALAALFGASFVAVSGFFMHF. Positions 40 to 167 are disordered; it reads ERKENPDGDE…DDDDNLTNSE (128 aa). Residues 85–94 are compositionally biased toward gly residues; the sequence is DGGGGGGGDT. 2 positions are modified to phosphoserine: serine 134 and serine 140. Residues 153 to 162 are compositionally biased toward acidic residues; the sequence is SVEESDDDDN. Position 203 is a phosphoserine (serine 203). Position 289–296 (289–296) interacts with ATP; the sequence is AHYPQGKS. Positions 391 and 393 each coordinate Zn(2+). Substrate-binding positions include histidine 393 and 462–467; that span reads KFNLKY. Residue histidine 659 coordinates Zn(2+). Glutamate 662 lines the substrate pocket. Histidine 681 functions as the Proton acceptor in the catalytic mechanism. Aspartate 736 lines the Zn(2+) pocket. 737-740 is a binding site for substrate; that stretch reads DPLQ.

Belongs to the metallo-dependent hydrolases superfamily. Adenosine and AMP deaminases family. Homodimer. Interacts with AHK4. Interacts with EER5. Requires Zn(2+) as cofactor. As to expression, expressed in seedlings, roots, leaves, flowers, pollen grains, pollen tubes and siliques, and at a lower level in stems.

The protein localises to the membrane. Its subcellular location is the microsome membrane. It carries out the reaction AMP + H2O + H(+) = IMP + NH4(+). Its pathway is purine metabolism; IMP biosynthesis via salvage pathway; IMP from AMP: step 1/1. With respect to regulation, activated by ATP. Activated by sulfate ions (in vitro). Inhibited by phosphate ions. Its function is as follows. AMP deaminase plays a critical role in energy metabolism. Essential for the transition from zygote to embryo. This chain is AMP deaminase, found in Arabidopsis thaliana (Mouse-ear cress).